The sequence spans 628 residues: E3 SUMO-protein ligase PIAS3 (628 aa).

Residues 1–200 (MAELGELKHM…QLRFCLCETS (200 aa)) form an interaction with CCAR2 region. The 35-residue stretch at 11 to 45 (VMSFRVSELQVLLGFAGRNKSGRKHELLAKALHLL) folds into the SAP domain. Residues 19-23 (LQVLL) carry the LXXLL motif motif. Glycyl lysine isopeptide (Lys-Gly) (interchain with G-Cter in SUMO2) cross-links involve residues Lys-46, Lys-56, Lys-230, and Lys-307. The PINIT domain maps to 115 to 280 (MHPPLPQPVH…SLSVYLVRQL (166 aa)). An SP-RING-type zinc finger spans residues 312 to 393 (PDSEVATTSL…FMEILSSCSD (82 aa)). Zn(2+) is bound by residues Cys-343, His-345, Cys-366, and Cys-369. Residues 450–460 (LTIESSSDEED) form an SUMO1-binding region. Residues Lys-466 and Lys-482 each participate in a glycyl lysine isopeptide (Lys-Gly) (interchain with G-Cter in SUMO2) cross-link. The disordered stretch occupies residues 597–617 (VAPGGALREGHGGPLPSGPSL).

The protein belongs to the PIAS family. Monomer. Binds SUMO1 and UBE2I. Interacts with BCL11A, HMGA2, IRF1, MITF and NCOA2. Interacts with STAT5; the interaction occurs on stimulation by PRL. Interacts with GFI1; the interaction relieves the inhibitory effect of PIAS3 on STAT3-mediated transcriptional activity. Interacts with AR, PLAG1 and ZFHX3. Interacts with STAT3; the interaction occurs on stimulation by IL6, CNTF or OSM and inhibits the DNA binding activity of STAT3. Interacts with MTA1. Interacts with CCAR2 (via N-terminus). Interacts with TRIM8. Interacts with PRDM1/Blimp-1. Post-translationally, sumoylated. Widely expressed.

The protein resides in the cytoplasm. The protein localises to the nucleus. It localises to the nucleus speckle. Its pathway is protein modification; protein sumoylation. Its function is as follows. Functions as an E3-type small ubiquitin-like modifier (SUMO) ligase, stabilizing the interaction between UBE2I and the substrate, and as a SUMO-tethering factor. Plays a crucial role as a transcriptional coregulation in various cellular pathways, including the STAT pathway and the steroid hormone signaling pathway. Involved in regulating STAT3 signaling via inhibiting STAT3 DNA-binding and suppressing cell growth. Enhances the sumoylation of MTA1 and may participate in its paralog-selective sumoylation. Sumoylates CCAR2 which promotes its interaction with SIRT1. Diminishes the sumoylation of ZFHX3 by preventing the colocalization of ZFHX3 with SUMO1 in the nucleus. This chain is E3 SUMO-protein ligase PIAS3 (PIAS3), found in Homo sapiens (Human).